Here is a 260-residue protein sequence, read N- to C-terminus: MILNKIKVVVAGFRGKMGSTAVQMILNAPNFELVALLGRKEEVSEAFDVPVFNRKEELENIEADVWLDLTAPEVAYENAYFALEHGLKPVVGTTGFTEDEVARLIKFSREKELGGLIAPNFALGAVLLMQFSKQAVKYFPDVEIIELHHDGKKDAPSGTAVKTAELMAEERLAHHQGAVDEKESLVGARGAVLEGMRIHSVRLPGLVAHQEVIFGSKGEGLTLRHDSYDRSSFMTGIALGIRKVMTVSELKYGLEHFLDL.

NAD(+) is bound by residues 12–17 (GFRGKM), 92–94 (GTT), and 118–121 (APNF). The active-site Proton donor/acceptor is the histidine 148. (S)-2,3,4,5-tetrahydrodipicolinate is bound at residue histidine 149. Lysine 152 functions as the Proton donor in the catalytic mechanism. Position 158-159 (158-159 (GT)) interacts with (S)-2,3,4,5-tetrahydrodipicolinate.

Belongs to the DapB family.

The protein resides in the cytoplasm. It catalyses the reaction (S)-2,3,4,5-tetrahydrodipicolinate + NAD(+) + H2O = (2S,4S)-4-hydroxy-2,3,4,5-tetrahydrodipicolinate + NADH + H(+). It carries out the reaction (S)-2,3,4,5-tetrahydrodipicolinate + NADP(+) + H2O = (2S,4S)-4-hydroxy-2,3,4,5-tetrahydrodipicolinate + NADPH + H(+). It functions in the pathway amino-acid biosynthesis; L-lysine biosynthesis via DAP pathway; (S)-tetrahydrodipicolinate from L-aspartate: step 4/4. In terms of biological role, catalyzes the conversion of 4-hydroxy-tetrahydrodipicolinate (HTPA) to tetrahydrodipicolinate. This Lactococcus lactis subsp. cremoris (strain SK11) protein is 4-hydroxy-tetrahydrodipicolinate reductase.